Consider the following 165-residue polypeptide: Thiol peroxidase (165 aa).

The Thioredoxin domain occupies 18-165; sequence PQVGDVVTDF…PNYDAALAVL (148 aa). C60 serves as the catalytic Cysteine sulfenic acid (-SOH) intermediate. C60 and C94 are disulfide-bonded.

Belongs to the peroxiredoxin family. Tpx subfamily. Homodimer.

It catalyses the reaction a hydroperoxide + [thioredoxin]-dithiol = an alcohol + [thioredoxin]-disulfide + H2O. Its function is as follows. Thiol-specific peroxidase that catalyzes the reduction of hydrogen peroxide and organic hydroperoxides to water and alcohols, respectively. Plays a role in cell protection against oxidative stress by detoxifying peroxides. This Pasteurella multocida (strain Pm70) protein is Thiol peroxidase.